The primary structure comprises 232 residues: Large ribosomal subunit protein uL1 (232 aa).

It belongs to the universal ribosomal protein uL1 family. Part of the 50S ribosomal subunit.

Binds directly to 23S rRNA. The L1 stalk is quite mobile in the ribosome, and is involved in E site tRNA release. Its function is as follows. Protein L1 is also a translational repressor protein, it controls the translation of the L11 operon by binding to its mRNA. In Bordetella petrii (strain ATCC BAA-461 / DSM 12804 / CCUG 43448), this protein is Large ribosomal subunit protein uL1.